The sequence spans 145 residues: Large ribosomal subunit protein uL11 (145 aa).

The protein belongs to the universal ribosomal protein uL11 family. As to quaternary structure, part of the ribosomal stalk of the 50S ribosomal subunit. Interacts with L10 and the large rRNA to form the base of the stalk. L10 forms an elongated spine to which L12 dimers bind in a sequential fashion forming a multimeric L10(L12)X complex. One or more lysine residues are methylated.

Forms part of the ribosomal stalk which helps the ribosome interact with GTP-bound translation factors. The polypeptide is Large ribosomal subunit protein uL11 (Francisella philomiragia subsp. philomiragia (strain ATCC 25017 / CCUG 19701 / FSC 153 / O#319-036)).